We begin with the raw amino-acid sequence, 173 residues long: Shikimate kinase 1 (173 aa).

14–19 (GAGKST) is a binding site for ATP. Position 18 (Ser-18) interacts with Mg(2+). Residues Asp-36, Arg-60, and Gly-82 each coordinate substrate. Position 120 (Arg-120) interacts with ATP. Position 140 (Arg-140) interacts with substrate. Residue Gln-157 coordinates ATP.

This sequence belongs to the shikimate kinase family. In terms of assembly, monomer. Requires Mg(2+) as cofactor.

It is found in the cytoplasm. The enzyme catalyses shikimate + ATP = 3-phosphoshikimate + ADP + H(+). Its pathway is metabolic intermediate biosynthesis; chorismate biosynthesis; chorismate from D-erythrose 4-phosphate and phosphoenolpyruvate: step 5/7. Catalyzes the specific phosphorylation of the 3-hydroxyl group of shikimic acid using ATP as a cosubstrate. This Escherichia fergusonii (strain ATCC 35469 / DSM 13698 / CCUG 18766 / IAM 14443 / JCM 21226 / LMG 7866 / NBRC 102419 / NCTC 12128 / CDC 0568-73) protein is Shikimate kinase 1.